Reading from the N-terminus, the 617-residue chain is Protein kinase STUNTED (617 aa).

Residues 162–187 (SSELSEGFSDKDLAKTTGQEKRKISG) are disordered. Over residues 169 to 184 (FSDKDLAKTTGQEKRK) the composition is skewed to basic and acidic residues. One can recognise a Protein kinase domain in the interval 277–555 (FSLENLIGKG…RGEDDVSKWV (279 aa)). Residues 283-291 (IGKGGCNEV) and Lys-305 contribute to the ATP site. Residue Tyr-350 is modified to Phosphotyrosine. Asp-399 acts as the Proton acceptor in catalysis. The residue at position 403 (Ser-403) is a Phosphoserine. The residue at position 439 (Thr-439) is a Phosphothreonine. Tyr-447 carries the phosphotyrosine modification. The tract at residues 590 to 617 (DSVSNSSLERSNNSLFSSSSSSSQELQS) is disordered. Residues 591–617 (SVSNSSLERSNNSLFSSSSSSSQELQS) are compositionally biased toward low complexity.

This sequence belongs to the protein kinase superfamily. Ser/Thr protein kinase family. Expressed ubiquitously, mostly in roots, to a lower extent in leaves, floral buds and stems, and, at low levels, in flowers and siliques.

It localises to the cytoplasm. Functionally, promotes cell proliferation in the gibberellic acid (GA) signaling pathway, acting downstream of RGA, and possibly through a negative regulation of two cyclin-dependent kinase inhibitors SIM and SMR1. This Arabidopsis thaliana (Mouse-ear cress) protein is Protein kinase STUNTED.